Here is a 212-residue protein sequence, read N- to C-terminus: 3-isopropylmalate dehydratase small subunit (212 aa).

The protein belongs to the LeuD family. LeuD type 1 subfamily. Heterodimer of LeuC and LeuD.

The catalysed reaction is (2R,3S)-3-isopropylmalate = (2S)-2-isopropylmalate. It participates in amino-acid biosynthesis; L-leucine biosynthesis; L-leucine from 3-methyl-2-oxobutanoate: step 2/4. Catalyzes the isomerization between 2-isopropylmalate and 3-isopropylmalate, via the formation of 2-isopropylmaleate. This chain is 3-isopropylmalate dehydratase small subunit, found in Thiobacillus denitrificans (strain ATCC 25259 / T1).